Reading from the N-terminus, the 243-residue chain is Hydroxyacylglutathione hydrolase (243 aa).

The Zn(2+) site is built by histidine 59, histidine 61, aspartate 63, histidine 64, histidine 117, aspartate 135, and histidine 173.

The protein belongs to the metallo-beta-lactamase superfamily. Glyoxalase II family. In terms of assembly, monomer. Zn(2+) serves as cofactor.

It carries out the reaction an S-(2-hydroxyacyl)glutathione + H2O = a 2-hydroxy carboxylate + glutathione + H(+). It participates in secondary metabolite metabolism; methylglyoxal degradation; (R)-lactate from methylglyoxal: step 2/2. In terms of biological role, thiolesterase that catalyzes the hydrolysis of S-D-lactoyl-glutathione to form glutathione and D-lactic acid. In Acidiphilium cryptum (strain JF-5), this protein is Hydroxyacylglutathione hydrolase.